The primary structure comprises 1273 residues: DNA-directed RNA polymerase subunit beta (1273 aa).

This sequence belongs to the RNA polymerase beta chain family. The RNAP catalytic core consists of 2 alpha, 1 beta, 1 beta' and 1 omega subunit. When a sigma factor is associated with the core the holoenzyme is formed, which can initiate transcription.

It catalyses the reaction RNA(n) + a ribonucleoside 5'-triphosphate = RNA(n+1) + diphosphate. In terms of biological role, DNA-dependent RNA polymerase catalyzes the transcription of DNA into RNA using the four ribonucleoside triphosphates as substrates. The sequence is that of DNA-directed RNA polymerase subunit beta from Aster yellows witches'-broom phytoplasma (strain AYWB).